Reading from the N-terminus, the 669-residue chain is DNA ligase (669 aa).

NAD(+) is bound by residues 34–38 (DAEYD), 83–84 (SL), and Glu-114. The active-site N6-AMP-lysine intermediate is Lys-116. NAD(+) contacts are provided by Arg-137, Glu-171, Lys-287, and Lys-311. Zn(2+) contacts are provided by Cys-405, Cys-408, Cys-423, and Cys-428. The 79-residue stretch at 591 to 669 (NVESYFAGKT…EERFLQELNK (79 aa)) folds into the BRCT domain.

The protein belongs to the NAD-dependent DNA ligase family. LigA subfamily. It depends on Mg(2+) as a cofactor. Mn(2+) is required as a cofactor.

It carries out the reaction NAD(+) + (deoxyribonucleotide)n-3'-hydroxyl + 5'-phospho-(deoxyribonucleotide)m = (deoxyribonucleotide)n+m + AMP + beta-nicotinamide D-nucleotide.. Functionally, DNA ligase that catalyzes the formation of phosphodiester linkages between 5'-phosphoryl and 3'-hydroxyl groups in double-stranded DNA using NAD as a coenzyme and as the energy source for the reaction. It is essential for DNA replication and repair of damaged DNA. The sequence is that of DNA ligase from Bacillus anthracis (strain A0248).